We begin with the raw amino-acid sequence, 673 residues long: MSKPFKLNSAFKPSGDQPEAIRRLEEGLEDGLAHQTLLGVTGSGKTFTIANVIADLQRPTMVLAPNKTLAAQLYGEMKEFFPENAVEYFVSYYDYYQPEAYVPSSDTFIEKDASVNEHIEQMRLSATKAMLERRDVVVVASVSAIYGLGDPDLYLKMMLHLTVGMIIDQRAILRRLAELQYTRNDQAFQRGTFRVRGEVIDIFPAESDDIALRVELFDEEVERLSLFDPLTGQIVSTIPRFTIYPKTHYVTPRERIVQAMEEIKEELAARRKVLLENNKLLEEQRLTQRTQFDLEMMNELGYCSGIENYSRFLSGRGPGEPPPTLFDYLPADGLLVVDESHVTIPQIGGMYRGDRARKETLVEYGFRLPSALDNRPLKFEEFEALAPQTIYVSATPGNYELEKSGGDVVDQVVRPTGLLDPIIEVRPVATQVDDLLSEIRQRAAINERVLVTTLTKRMAEDLTEYLEEHGERVRYLHSDIDTVERMEIIRDLRLGEFDVLVGINLLREGLDMPEVSLVAILDADKEGFLRSERSLIQTIGRAARNVNGKAILYGDKITPSMAKAIGETERRREKQQKYNEEHGITPQGLNKKVVDILALGQNIAKTKAKGRGKSRPIVEPDNVPMDMSPKALQQKIHELEGLMMQHAQNLEFEEAAQIRDQLHQLRELFIAAS.

In terms of domain architecture, Helicase ATP-binding spans Glu-26–Arg-183. Gly-39 to Thr-46 serves as a coordination point for ATP. The Beta-hairpin signature appears at Tyr-92–Val-115. One can recognise a Helicase C-terminal domain in the interval Gln-431–Leu-597. The disordered stretch occupies residues Ala-608–Met-627. The region spanning Gln-633–Leu-668 is the UVR domain.

This sequence belongs to the UvrB family. As to quaternary structure, forms a heterotetramer with UvrA during the search for lesions. Interacts with UvrC in an incision complex.

Its subcellular location is the cytoplasm. Functionally, the UvrABC repair system catalyzes the recognition and processing of DNA lesions. A damage recognition complex composed of 2 UvrA and 2 UvrB subunits scans DNA for abnormalities. Upon binding of the UvrA(2)B(2) complex to a putative damaged site, the DNA wraps around one UvrB monomer. DNA wrap is dependent on ATP binding by UvrB and probably causes local melting of the DNA helix, facilitating insertion of UvrB beta-hairpin between the DNA strands. Then UvrB probes one DNA strand for the presence of a lesion. If a lesion is found the UvrA subunits dissociate and the UvrB-DNA preincision complex is formed. This complex is subsequently bound by UvrC and the second UvrB is released. If no lesion is found, the DNA wraps around the other UvrB subunit that will check the other stand for damage. The protein is UvrABC system protein B of Escherichia fergusonii (strain ATCC 35469 / DSM 13698 / CCUG 18766 / IAM 14443 / JCM 21226 / LMG 7866 / NBRC 102419 / NCTC 12128 / CDC 0568-73).